The chain runs to 333 residues: MEAAHFFEGTEKLLEVWFSRQQSDASQGSGDLRTIPRSEWDVLLKDVQCSIISVTKTDKQEAYVLSESSMFVSKRRFILKTCGTTLLLKALVPLLKLARDYSGFDSIQSFFYSRKNFMKPSHQGYPHRNFQEEIEFLNAIFPNGAAYCMGRMNSDCWYLYTLDLPESRVINQPDQTLEILMSELDPAVMDQFYMKDGVTAKDVTRESGIRDLIPGSVIDATLFNPCGYSMNGMKSDGTYWTIHITPEPEFSYVSFETNLSQTSYDDLIRKVVEVFKPGKFVTTLFVNQSSKCRTVLSSPQKIDGFKRLDCQSAMFNDYNFVFTSFAKKQQQQS.

Position 7 (Phe-7) interacts with substrate. Active-site residues include Glu-8 and Glu-11. Glu-67 is a substrate binding site. Ser-68 serves as the catalytic Schiff-base intermediate with substrate; via pyruvic acid. Residue Ser-68 is modified to Pyruvic acid (Ser); by autocatalysis. Cys-82 acts as the Proton donor; for catalytic activity in catalysis. A substrate-binding site is contributed by Phe-223. Residues Ser-229 and His-243 each act as proton acceptor; for processing activity in the active site. Residue Glu-247 coordinates substrate. Ser-298 is modified (phosphoserine).

Belongs to the eukaryotic AdoMetDC family. Heterotetramer of two alpha and two beta chains. It depends on pyruvate as a cofactor. Is synthesized initially as an inactive proenzyme. Formation of the active enzyme involves a self-maturation process in which the active site pyruvoyl group is generated from an internal serine residue via an autocatalytic post-translational modification. Two non-identical subunits are generated from the proenzyme in this reaction, and the pyruvate is formed at the N-terminus of the alpha chain, which is derived from the carboxyl end of the proenzyme. The post-translation cleavage follows an unusual pathway, termed non-hydrolytic serinolysis, in which the side chain hydroxyl group of the serine supplies its oxygen atom to form the C-terminus of the beta chain, while the remainder of the serine residue undergoes an oxidative deamination to produce ammonia and the pyruvoyl group blocking the N-terminus of the alpha chain.

It catalyses the reaction S-adenosyl-L-methionine + H(+) = S-adenosyl 3-(methylsulfanyl)propylamine + CO2. It functions in the pathway amine and polyamine biosynthesis; S-adenosylmethioninamine biosynthesis; S-adenosylmethioninamine from S-adenosyl-L-methionine: step 1/1. Functionally, essential for biosynthesis of the polyamines spermidine and spermine. Promotes maintenance and self-renewal of embryonic stem cells, by maintaining spermine levels. The chain is S-adenosylmethionine decarboxylase proenzyme (Amd1) from Rattus norvegicus (Rat).